The primary structure comprises 344 residues: Heat-inducible transcription repressor HrcA (344 aa).

Belongs to the HrcA family.

Its function is as follows. Negative regulator of class I heat shock genes (grpE-dnaK-dnaJ and groELS operons). Prevents heat-shock induction of these operons. This Streptococcus equi subsp. zooepidemicus (strain MGCS10565) protein is Heat-inducible transcription repressor HrcA.